We begin with the raw amino-acid sequence, 179 residues long: Deoxyuridine 5'-triphosphate nucleotidohydrolase (179 aa).

Substrate-binding positions include 90–92 (RSG), N103, 107–109 (TVD), and K117.

This sequence belongs to the dUTPase family. The cofactor is Mg(2+).

It catalyses the reaction dUTP + H2O = dUMP + diphosphate + H(+). It functions in the pathway pyrimidine metabolism; dUMP biosynthesis; dUMP from dCTP (dUTP route): step 2/2. In terms of biological role, this enzyme is involved in nucleotide metabolism: it produces dUMP, the immediate precursor of thymidine nucleotides and it decreases the intracellular concentration of dUTP so that uracil cannot be incorporated into DNA. The sequence is that of Deoxyuridine 5'-triphosphate nucleotidohydrolase from Thermobifida fusca (strain YX).